Reading from the N-terminus, the 132-residue chain is Gonadotropin subunit beta-1 (132 aa).

Residues 1 to 17 (MMRGVTMVLLLPMLVWA) form the signal peptide. Intrachain disulfides connect cysteine 25–cysteine 73, cysteine 39–cysteine 88, cysteine 50–cysteine 104, cysteine 54–cysteine 106, and cysteine 109–cysteine 116. Residues asparagine 29 and asparagine 46 are each glycosylated (N-linked (GlcNAc...) asparagine).

Belongs to the glycoprotein hormones subunit beta family. Heterodimer of an alpha and a beta chain.

It localises to the secreted. Involved in gametogenesis and steroidogenesis. In Ictalurus punctatus (Channel catfish), this protein is Gonadotropin subunit beta-1 (cgba).